Reading from the N-terminus, the 432-residue chain is Anaerobic glycerol-3-phosphate dehydrogenase subunit B (432 aa).

It belongs to the anaerobic G-3-P dehydrogenase subunit B family. Composed of a catalytic GlpA/B dimer and of membrane bound GlpC. It depends on FMN as a cofactor.

The catalysed reaction is a quinone + sn-glycerol 3-phosphate = dihydroxyacetone phosphate + a quinol. The protein operates within polyol metabolism; glycerol degradation via glycerol kinase pathway; glycerone phosphate from sn-glycerol 3-phosphate (anaerobic route): step 1/1. Its function is as follows. Conversion of glycerol 3-phosphate to dihydroxyacetone. Uses fumarate or nitrate as electron acceptor. This chain is Anaerobic glycerol-3-phosphate dehydrogenase subunit B, found in Haemophilus influenzae (strain PittGG).